The following is a 483-amino-acid chain: Cobyric acid synthase (483 aa).

Positions 251 to 438 constitute a GATase cobBQ-type domain; the sequence is ALIVAVPMLP…LHGVFSADRF (188 aa). Residue Cys333 is the Nucleophile of the active site. His430 is an active-site residue.

This sequence belongs to the CobB/CobQ family. CobQ subfamily.

The protein operates within cofactor biosynthesis; adenosylcobalamin biosynthesis. In terms of biological role, catalyzes amidations at positions B, D, E, and G on adenosylcobyrinic A,C-diamide. NH(2) groups are provided by glutamine, and one molecule of ATP is hydrogenolyzed for each amidation. The protein is Cobyric acid synthase of Brucella suis biovar 1 (strain 1330).